We begin with the raw amino-acid sequence, 187 residues long: PsbQ-like protein 3, chloroplastic (187 aa).

The N-terminal 32 residues, 1 to 32, are a transit peptide targeting the chloroplast; the sequence is MAISKPPPLHFTFFHNQDSSIDTSDSNLALSI. A thylakoid-targeting transit peptide spans 33–60; it reads DTSRRRRDVLLTISGTLIPQLFFFDRKR.

It belongs to the PsbQ family. In terms of assembly, subunit of the lumenal protuberance of the NDH complex.

It is found in the plastid. The protein localises to the chloroplast thylakoid membrane. Its function is as follows. Required for both formation and activity of the chloroplast NAD(P)H dehydrogenase (NDH) complex. In Arabidopsis thaliana (Mouse-ear cress), this protein is PsbQ-like protein 3, chloroplastic (PQL3).